A 467-amino-acid chain; its full sequence is DNA polymerase IV (467 aa).

Residues 5–187 (VLHIDMDAFF…LPVGALWGVG (183 aa)) enclose the UmuC domain. 2 residues coordinate Mg(2+): D9 and D104. The active site involves E105. 2 disordered regions span residues 364–383 (PDTD…STQV) and 429–449 (KGRT…DPLD).

Belongs to the DNA polymerase type-Y family. As to quaternary structure, monomer. It depends on Mg(2+) as a cofactor.

It is found in the cytoplasm. The enzyme catalyses DNA(n) + a 2'-deoxyribonucleoside 5'-triphosphate = DNA(n+1) + diphosphate. Poorly processive, error-prone DNA polymerase involved in untargeted mutagenesis. Copies undamaged DNA at stalled replication forks, which arise in vivo from mismatched or misaligned primer ends. These misaligned primers can be extended by PolIV. Exhibits no 3'-5' exonuclease (proofreading) activity. May be involved in translesional synthesis, in conjunction with the beta clamp from PolIII. This is DNA polymerase IV from Corynebacterium glutamicum (strain ATCC 13032 / DSM 20300 / JCM 1318 / BCRC 11384 / CCUG 27702 / LMG 3730 / NBRC 12168 / NCIMB 10025 / NRRL B-2784 / 534).